The following is a 209-amino-acid chain: Thiamine-phosphate synthase (209 aa).

Residues 35–39 (QLRNK) and asparagine 67 each bind 4-amino-2-methyl-5-(diphosphooxymethyl)pyrimidine. Mg(2+) contacts are provided by aspartate 68 and aspartate 87. Serine 106 is a binding site for 4-amino-2-methyl-5-(diphosphooxymethyl)pyrimidine. 132–134 (TGS) provides a ligand contact to 2-[(2R,5Z)-2-carboxy-4-methylthiazol-5(2H)-ylidene]ethyl phosphate. Lysine 135 provides a ligand contact to 4-amino-2-methyl-5-(diphosphooxymethyl)pyrimidine. 2-[(2R,5Z)-2-carboxy-4-methylthiazol-5(2H)-ylidene]ethyl phosphate-binding positions include glycine 163 and 183–184 (IS).

Belongs to the thiamine-phosphate synthase family. Requires Mg(2+) as cofactor.

The enzyme catalyses 2-[(2R,5Z)-2-carboxy-4-methylthiazol-5(2H)-ylidene]ethyl phosphate + 4-amino-2-methyl-5-(diphosphooxymethyl)pyrimidine + 2 H(+) = thiamine phosphate + CO2 + diphosphate. The catalysed reaction is 2-(2-carboxy-4-methylthiazol-5-yl)ethyl phosphate + 4-amino-2-methyl-5-(diphosphooxymethyl)pyrimidine + 2 H(+) = thiamine phosphate + CO2 + diphosphate. It catalyses the reaction 4-methyl-5-(2-phosphooxyethyl)-thiazole + 4-amino-2-methyl-5-(diphosphooxymethyl)pyrimidine + H(+) = thiamine phosphate + diphosphate. It functions in the pathway cofactor biosynthesis; thiamine diphosphate biosynthesis; thiamine phosphate from 4-amino-2-methyl-5-diphosphomethylpyrimidine and 4-methyl-5-(2-phosphoethyl)-thiazole: step 1/1. In terms of biological role, condenses 4-methyl-5-(beta-hydroxyethyl)thiazole monophosphate (THZ-P) and 2-methyl-4-amino-5-hydroxymethyl pyrimidine pyrophosphate (HMP-PP) to form thiamine monophosphate (TMP). The polypeptide is Thiamine-phosphate synthase (Chlorobium phaeovibrioides (strain DSM 265 / 1930) (Prosthecochloris vibrioformis (strain DSM 265))).